The chain runs to 120 residues: Basic phospholipase A2 Cc2-PLA2 (120 aa).

Disulfide bonds link C26–C113, C28–C44, C43–C95, C49–C120, C50–C88, C57–C81, and C75–C86. Positions 27, 29, and 31 each coordinate Ca(2+). The active site involves H47. D48 serves as a coordination point for Ca(2+). D89 is a catalytic residue.

Belongs to the phospholipase A2 family. Group II subfamily. D49 sub-subfamily. Monomer. The cofactor is Ca(2+). Expressed by the venom gland.

The protein localises to the secreted. It catalyses the reaction a 1,2-diacyl-sn-glycero-3-phosphocholine + H2O = a 1-acyl-sn-glycero-3-phosphocholine + a fatty acid + H(+). Its function is as follows. Basic phospholipase A2 that inhibits ADP-, thrombin- and arachidonic acid-induced platelet aggregation. It also exhibits anticoagulant effects upon human plasma in vitro. It induces a high hemolytic activity reaching its maximum after 24 hours. It induces a marked elevation of plasmatic levels of interleukin-6 and -10, eosinophil peroxidase and complement lytic activities and it also provokes a drastic increase of lymphocytes, monocytes and neutrophils in peripheral blood accompanied by a rapid intense migration of neutrophils to the peritoneal cavity. PLA2 catalyzes the calcium-dependent hydrolysis of the 2-acyl groups in 3-sn-phosphoglycerides. The polypeptide is Basic phospholipase A2 Cc2-PLA2 (Cerastes cerastes (Horned desert viper)).